The sequence spans 219 residues: Thymidylate kinase (219 aa).

10–17 (GLEGAGKT) provides a ligand contact to ATP.

The protein belongs to the thymidylate kinase family.

The enzyme catalyses dTMP + ATP = dTDP + ADP. Its function is as follows. Phosphorylation of dTMP to form dTDP in both de novo and salvage pathways of dTTP synthesis. This is Thymidylate kinase from Pectobacterium carotovorum subsp. carotovorum (strain PC1).